The chain runs to 151 residues: Epigen (151 aa).

A signal peptide spans 1 to 18 (MAFGMLIYILLKAMGALS). Topologically, residues 19 to 108 (EEAALTASSL…NSYAHNSYER (90 aa)) are extracellular. Residue Asn39 is glycosylated (N-linked (GlcNAc...) asparagine). Residues 54–94 (LMQTCLEEHHSYCINGLCAFHSELRKPICKCLAGYNGERCE) form the EGF-like domain. Intrachain disulfides connect Cys58–Cys71, Cys66–Cys82, and Cys84–Cys93. A helical transmembrane segment spans residues 109–129 (YIAVGIGIGILTSGILAIIYC). The Cytoplasmic segment spans residues 130–151 (YVRKRCRKLKSPYKVCMGETAL).

Its subcellular location is the membrane. Its function is as follows. Promotes the growth of epithelial cells. In Gallus gallus (Chicken), this protein is Epigen (EPGN).